A 401-amino-acid chain; its full sequence is Probable inactive purple acid phosphatase 14 (401 aa).

The signal sequence occupies residues 1–30; that stretch reads MEETRRRFVISSVLSVSLIYLCLSTCHVSA. Asn79 carries an N-linked (GlcNAc...) asparagine glycan. Asn197 lines the substrate pocket. Asn197 lines the Zn(2+) pocket. A glycan (N-linked (GlcNAc...) asparagine) is linked at Asn246. Residue His256 participates in Zn(2+) binding. N-linked (GlcNAc...) asparagine glycosylation occurs at Asn266. Residue His305 coordinates Zn(2+). 305 to 307 is a substrate binding site; that stretch reads HDH. His307 contacts Fe cation. 2 N-linked (GlcNAc...) asparagine glycosylation sites follow: Asn371 and Asn384.

The protein belongs to the metallophosphoesterase superfamily. Purple acid phosphatase family. In terms of assembly, homodimer. Fe cation is required as a cofactor. Requires Zn(2+) as cofactor. In terms of tissue distribution, specifically expressed in flowers.

It is found in the secreted. The sequence is that of Probable inactive purple acid phosphatase 14 (PAP14) from Arabidopsis thaliana (Mouse-ear cress).